A 221-amino-acid polypeptide reads, in one-letter code: Cytidylate kinase 1 (221 aa).

ATP is bound at residue 7–15 (GPSASGKSS).

Belongs to the cytidylate kinase family. Type 1 subfamily.

It localises to the cytoplasm. The enzyme catalyses CMP + ATP = CDP + ADP. It catalyses the reaction dCMP + ATP = dCDP + ADP. This is Cytidylate kinase 1 from Borreliella burgdorferi (strain ATCC 35210 / DSM 4680 / CIP 102532 / B31) (Borrelia burgdorferi).